Here is a 469-residue protein sequence, read N- to C-terminus: Ribonuclease Y (469 aa).

A helical transmembrane segment spans residues 6 to 26 (VTLILVGVIIFLFISLFFYVI). Positions 149-209 (FSFTIKLENE…IRREKAKRTM (61 aa)) constitute a KH domain. The HD domain maps to 276–369 (VLLHCVEAAV…VKVVDKLSAS (94 aa)).

Belongs to the RNase Y family.

Its subcellular location is the cell membrane. Its function is as follows. Endoribonuclease that initiates mRNA decay. This is Ribonuclease Y from Malacoplasma penetrans (strain HF-2) (Mycoplasma penetrans).